The chain runs to 335 residues: Dihydroorotate dehydrogenase (quinone) (335 aa).

Residues A59–K63 and T83 contribute to the FMN site. K63 is a substrate binding site. N108 to F112 is a substrate binding site. FMN is bound by residues N136 and N169. N169 is a substrate binding site. Catalysis depends on S172, which acts as the Nucleophile. N174 contributes to the substrate binding site. The FMN site is built by K214 and G242. N243–T244 is a binding site for substrate. FMN-binding positions include G265, G294, and Y315–S316.

The protein belongs to the dihydroorotate dehydrogenase family. Type 2 subfamily. In terms of assembly, monomer. It depends on FMN as a cofactor.

It is found in the cell membrane. It carries out the reaction (S)-dihydroorotate + a quinone = orotate + a quinol. The protein operates within pyrimidine metabolism; UMP biosynthesis via de novo pathway; orotate from (S)-dihydroorotate (quinone route): step 1/1. In terms of biological role, catalyzes the conversion of dihydroorotate to orotate with quinone as electron acceptor. The protein is Dihydroorotate dehydrogenase (quinone) of Glaesserella parasuis serovar 5 (strain SH0165) (Haemophilus parasuis).